The chain runs to 256 residues: Na(+)-translocating NADH-quinone reductase subunit C (256 aa).

A helical membrane pass occupies residues 12-32; that stretch reads LGVVIGLSLVCSIIVSTAAVG. The residue at position 224 (T224) is an FMN phosphoryl threonine.

Belongs to the NqrC family. Composed of six subunits; NqrA, NqrB, NqrC, NqrD, NqrE and NqrF. FMN is required as a cofactor.

The protein resides in the cell inner membrane. It carries out the reaction a ubiquinone + n Na(+)(in) + NADH + H(+) = a ubiquinol + n Na(+)(out) + NAD(+). Its activity is regulated as follows. This reaction is tightly coupled to the Na(+) pumping activity and specifically requires Na(+) for activity. Inhibited by korormicin and 2-N-heptyl-4-hydroxyquinoline N-oxide (HQNO). In terms of biological role, NQR complex catalyzes the reduction of ubiquinone-1 to ubiquinol by two successive reactions, coupled with the transport of Na(+) ions from the cytoplasm to the periplasm. NqrA to NqrE are probably involved in the second step, the conversion of ubisemiquinone to ubiquinol. The chain is Na(+)-translocating NADH-quinone reductase subunit C from Vibrio alginolyticus.